Here is a 666-residue protein sequence, read N- to C-terminus: tRNA 5-methylaminomethyl-2-thiouridine biosynthesis bifunctional protein MnmC (666 aa).

Residues 1–245 (MKQYAIQPAT…KREMLCGVME (245 aa)) are tRNA (mnm(5)s(2)U34)-methyltransferase. The segment at 270–666 (IGGGIASALL…RKLLKGKAVK (397 aa)) is FAD-dependent cmnm(5)s(2)U34 oxidoreductase.

In the N-terminal section; belongs to the methyltransferase superfamily. tRNA (mnm(5)s(2)U34)-methyltransferase family. This sequence in the C-terminal section; belongs to the DAO family. Requires FAD as cofactor.

It is found in the cytoplasm. The enzyme catalyses 5-aminomethyl-2-thiouridine(34) in tRNA + S-adenosyl-L-methionine = 5-methylaminomethyl-2-thiouridine(34) in tRNA + S-adenosyl-L-homocysteine + H(+). In terms of biological role, catalyzes the last two steps in the biosynthesis of 5-methylaminomethyl-2-thiouridine (mnm(5)s(2)U) at the wobble position (U34) in tRNA. Catalyzes the FAD-dependent demodification of cmnm(5)s(2)U34 to nm(5)s(2)U34, followed by the transfer of a methyl group from S-adenosyl-L-methionine to nm(5)s(2)U34, to form mnm(5)s(2)U34. The sequence is that of tRNA 5-methylaminomethyl-2-thiouridine biosynthesis bifunctional protein MnmC from Salmonella paratyphi B (strain ATCC BAA-1250 / SPB7).